The following is a 1249-amino-acid chain: Myosin-1 (1249 aa).

The interval 1-42 is disordered; the sequence is MGHSRRPAGGEKKSRGFGRSKAVADVGDGRQTGGKPQVKKAT. Residues 51-730 enclose the Myosin motor domain; it reads IGVSDLTLLS…TLFALEAMRD (680 aa). An ATP-binding site is contributed by 144–151; the sequence is GESGAGKT. Residue S372 is modified to Phosphoserine. Positions 419-501 are actin-binding; it reads SIGILDIYGF…PGVFAALNDA (83 aa). IQ domains follow at residues 734–754 and 755–780; these read HNMAIRIQRAWRNYLRYRTEC and AIRIQRFWRRTTGGLEFIKLRDQGHQ. The 191-residue stretch at 788 to 978 folds into the TH1 domain; the sequence is RRRMSLLGSR…TIHTGPGEPA (191 aa). 2 disordered regions span residues 962–1079 and 1126–1249; these read DDSY…PKKP and WTPE…DDDW. Positions 1021 to 1035 are enriched in pro residues; the sequence is AAQPLPRATPQPAEP. The span at 1036–1051 shows a compositional bias: low complexity; that stretch reads QPAARAVPQPVAAVAA. 2 stretches are compositionally biased toward pro residues: residues 1064–1077 and 1139–1150; these read APPPPPPAAAPAPK and TPKPAPPPPPAA. One can recognise an SH3 domain in the interval 1076-1137; it reads PKKPTAKVLY…PEAYLEEQVA (62 aa). Residues 1151–1169 show a composition bias toward low complexity; sequence PRSTPAPATNGAAAAAKAK. Polar residues predominate over residues 1200–1221; the sequence is VSMNSHDSSGGSGRGTPNSMSN. A compositionally biased stretch (low complexity) spans 1222 to 1231; that stretch reads ASLAGGLAEA.

This sequence belongs to the TRAFAC class myosin-kinesin ATPase superfamily. Myosin family. Phosphorylation of the TEDS site (Ser-372) is required for the polarization of the actin cytoskeleton. Phosphorylation probably activates the myosin-I ATPase activity.

It localises to the cytoplasm. The protein resides in the cytoskeleton. The protein localises to the actin patch. Functionally, type-I myosin implicated in the organization of the actin cytoskeleton. Required for proper actin cytoskeleton polarization. At the cell cortex, assembles in patch-like structures together with proteins from the actin-polymerizing machinery and promotes actin assembly. Functions as actin nucleation-promoting factor (NPF) for the Arp2/3 complex. Plays an important role in polarized growth, spore germination, hyphal morphogenesis, and septal wall formation. In Aspergillus fumigatus (strain ATCC MYA-4609 / CBS 101355 / FGSC A1100 / Af293) (Neosartorya fumigata), this protein is Myosin-1 (myoA).